Reading from the N-terminus, the 21-residue chain is QHSTDYDEEEEDRAKLHLDAR.

A Pyrrolidone carboxylic acid modification is found at glutamine 1. The segment covering glutamine 1 to glutamate 11 has biased composition (acidic residues). Positions glutamine 1–arginine 21 are disordered. Residue threonine 4 is glycosylated (O-linked (GalNAc...) threonine). Sulfotyrosine is present on tyrosine 6. Over residues aspartate 12–arginine 21 the composition is skewed to basic and acidic residues.

As to quaternary structure, heterohexamer; disulfide linked. Contains 2 sets of 3 non-identical chains (alpha, beta and gamma). The 2 heterotrimers are in head to head conformation with the N-termini in a small central domain. In terms of processing, conversion of fibrinogen to fibrin is triggered by thrombin, which cleaves fibrinopeptides A and B from alpha and beta chains, and thus exposes the N-terminal polymerization sites responsible for the formation of the soft clot.

It localises to the secreted. Cleaved by the protease thrombin to yield monomers which, together with fibrinogen alpha (FGA) and fibrinogen gamma (FGG), polymerize to form an insoluble fibrin matrix. Fibrin has a major function in hemostasis as one of the primary components of blood clots. In addition, functions during the early stages of wound repair to stabilize the lesion and guide cell migration during re-epithelialization. Was originally thought to be essential for platelet aggregation, based on in vitro studies using anticoagulated blood. However subsequent studies have shown that it is not absolutely required for thrombus formation in vivo. Enhances expression of SELP in activated platelets. Maternal fibrinogen is essential for successful pregnancy. Fibrin deposition is also associated with infection, where it protects against IFNG-mediated hemorrhage. May also facilitate the antibacterial immune response via both innate and T-cell mediated pathways. The protein is Fibrinogen beta chain (FGB) of Cervus elaphus (Red deer).